We begin with the raw amino-acid sequence, 191 residues long: Calcium and integrin-binding protein 1 (191 aa).

Gly2 carries the N-myristoyl glycine lipid modification. 2 EF-hand domains span residues 103 to 138 (TPDIKSHYAFRIFDFDDDGTLNREDLSRLVNCLTGE) and 148 to 183 (EMKQLIDNILEESDIDRDGTINLSEFQHVISRSPDF). Residues Asp116, Asp118, Asp120, Thr122, Asp127, Asp161, Asp163, Asp165, Thr167, and Glu172 each coordinate Ca(2+). Asp118 is modified (phosphoserine).

Monomer. Interacts with MYO1C. Interacts (via C-terminal region) with PPP3R1 and CACNA1C; the interactions increase upon cardiomyocytes hypertrophy. Interacts with the heterodimeric integrin alpha-IIb/beta3 (ITGA2B-ITGB3). Interacts with ITGA2B (via cytoplasmic domain); the interaction is direct and calcium-dependent. Interacts with the protein kinases PLK2/SNK and PRKDC (via the region immediately upstream of the kinase domain). Interacts with PLK3; the interaction inhibits PLK3 kinase activity. Interacts with PSEN2. Interacts (via C-terminus) with F8. Interacts with NBR1 (via C-terminus). Interacts with FEZ1 (via C-terminus). Interacts with UBR5 (via C-terminus); the interaction is sensitive to DNA damage, and may target CIB1 for ubiquitin-mediated degradation. Interacts with IFI6; the interaction is direct. Interacts with BCL2. Interacts with ITPR3; the interaction occurs in a calcium-dependent manner. Interacts with PTK2/FAK1. Interacts with MAP3K5; the interaction inhibits MAP3K5 activation by phosphorylation, and its subsequent interaction with TRAF2. Isoform 2 interacts with PRKD2 (via N-terminal AP-rich region), PTK2/FAK1 and PAK1. Interacts with TAS1R2 (via C-terminus); the interaction is independent of the myristoylation state of CIB1. Interacts (via C-terminal region) with STMN2 (via the N-terminal region); the interaction is direct, occurs in a calcium-dependent manner and attenuates the STMN2-induced neurite outgrowth inhibition. Interacts with SPHK1, the interaction occurs in a calcium-dependent manner. Interacts with ITGA2B (via C-terminal cytoplasmic tail); the interaction occurs upon platelet aggregation and is stabilized/increased in a calcium and magnesium-dependent manner. Interacts with PAK1 (via N-terminal region); the interaction is direct and occurs in a calcium-dependent manner. Interacts with RAC3 (via C-terminal region); the interaction induces their association with the cytoskeleton upon alpha-IIb/beta3 integrin-mediated adhesion. Interacts with ITGA5 and ITGAV. Interacts and forms a complex with TMC6 and TMC8; the interaction stabilizes each component of the complex. As to quaternary structure, (Microbial infection) Interacts with human papillomavirus 4/HPV4 protein E8, human papillomavirus 5/HPV5 protein E1, and human papillomavirus 16/HPV16 proteins E2 and E5. In terms of processing, phosphorylation of isoform 2 at Ser-118 by PRKD2 increases its ability to stimulate tumor angiogenesis. As to expression, ubiquitously expressed. Expressed in the epidermis, hair follicles and keratinocytes. Detected in platelets and in cell lines of megakaryocytic and erythrocytic lineages. Both isoform 1 and isoform 2 are detected in various cancer cell lines, with isoform 2 being the predominant form (at protein level).

It localises to the membrane. It is found in the cell membrane. Its subcellular location is the sarcolemma. The protein localises to the apical cell membrane. The protein resides in the cell projection. It localises to the ruffle membrane. It is found in the filopodium tip. Its subcellular location is the growth cone. The protein localises to the lamellipodium. The protein resides in the cytoplasm. It localises to the cytoskeleton. It is found in the microtubule organizing center. Its subcellular location is the centrosome. The protein localises to the perinuclear region. The protein resides in the nucleus. It localises to the neuron projection. It is found in the perikaryon. Its subcellular location is the golgi apparatus. The protein localises to the trans-Golgi network. In terms of biological role, calcium-binding protein that plays a role in the regulation of numerous cellular processes, such as cell differentiation, cell division, cell proliferation, cell migration, thrombosis, angiogenesis, cardiac hypertrophy and apoptosis. Involved in bone marrow megakaryocyte differentiation by negatively regulating thrombopoietin-mediated signaling pathway. Participates in the endomitotic cell cycle of megakaryocyte, a form of mitosis in which both karyokinesis and cytokinesis are interrupted. Plays a role in integrin signaling by negatively regulating alpha-IIb/beta3 activation in thrombin-stimulated megakaryocytes preventing platelet aggregation. Up-regulates PTK2/FAK1 activity, and is also needed for the recruitment of PTK2/FAK1 to focal adhesions; it thus appears to play an important role in focal adhesion formation. Positively regulates cell migration on fibronectin in a CDC42-dependent manner, the effect being negatively regulated by PAK1. Functions as a negative regulator of stress activated MAP kinase (MAPK) signaling pathways. Down-regulates inositol 1,4,5-trisphosphate receptor-dependent calcium signaling. Involved in sphingosine kinase SPHK1 translocation to the plasma membrane in a N-myristoylation-dependent manner preventing TNF-alpha-induced apoptosis. Regulates serine/threonine-protein kinase PLK3 activity for proper completion of cell division progression. Plays a role in microtubule (MT) dynamics during neuronal development; disrupts the MT depolymerization activity of STMN2 attenuating NGF-induced neurite outgrowth and the MT reorganization at the edge of lamellipodia. Promotes cardiomyocyte hypertrophy via activation of the calcineurin/NFAT signaling pathway. Stimulates calcineurin PPP3R1 activity by mediating its anchoring to the sarcolemma. In ischemia-induced (pathological or adaptive) angiogenesis, stimulates endothelial cell proliferation, migration and microvessel formation by activating the PAK1 and ERK1/ERK2 signaling pathway. Also promotes cancer cell survival and proliferation. May regulate cell cycle and differentiation of spermatogenic germ cells, and/or differentiation of supporting Sertoli cells. Forms a complex with TMC6/EVER1 and TMC8/EVER2 in lymphocytes and keratynocytes where CIB1 stabilizes TMC6 and TMC8 levels and reciprocally. Functionally, acts as a restriction factor that promotes keratinocyte-intrinsic immunity to human beta-papillomaviruses (HPVs). Its function is as follows. Plays a regulatory role in angiogenesis and tumor growth by mediating PKD/PRKD2-induced vascular endothelial growth factor A (VEGFA) secretion. The protein is Calcium and integrin-binding protein 1 (CIB1) of Homo sapiens (Human).